A 413-amino-acid chain; its full sequence is Chloramphenicol efflux pump Rv0191 (413 aa).

12 consecutive transmembrane segments (helical) span residues 23–43 (LSVL…PVGA), 55–75 (VVLV…TTVP), 89–109 (LVVS…APNF), 110–130 (AVLA…WAVI), 150–170 (IYIG…AMSL), 176–196 (LAAV…RLAL), 226–246 (VLTM…VVII), 256–276 (NLAW…PLVA), 286–306 (AVIV…ALAF), 312–332 (AATA…ATAV), 353–373 (GLYV…GGLL), and 378–398 (LAMM…GMTV).

This sequence belongs to the major facilitator superfamily.

It is found in the cell membrane. With respect to regulation, inhibited by the drug efflux pump inhibitors verapamil, resperine, piperine, chlorpromazine and carbonyl cyanide m-chlorophenylhydrazone (CCCP). Functionally, active efflux pump that plays an important role in chloramphenicol resistance. Overexpression causes pyrazinamide resistance. In Mycobacterium tuberculosis (strain ATCC 25618 / H37Rv), this protein is Chloramphenicol efflux pump Rv0191.